Reading from the N-terminus, the 150-residue chain is Lipoprotein signal peptidase (150 aa).

The next 3 membrane-spanning stretches (helical) occupy residues 5 to 25, 59 to 79, and 83 to 103; these read LSLV…NWIV, QQWF…WFLW, and AQNW…GNFI. Active-site residues include aspartate 113 and aspartate 129. A helical membrane pass occupies residues 124–144; that stretch reads IFNIADILLSVGFVLLFIAIL.

Belongs to the peptidase A8 family.

It is found in the cell membrane. The enzyme catalyses Release of signal peptides from bacterial membrane prolipoproteins. Hydrolyzes -Xaa-Yaa-Zaa-|-(S,diacylglyceryl)Cys-, in which Xaa is hydrophobic (preferably Leu), and Yaa (Ala or Ser) and Zaa (Gly or Ala) have small, neutral side chains.. Its pathway is protein modification; lipoprotein biosynthesis (signal peptide cleavage). In terms of biological role, this protein specifically catalyzes the removal of signal peptides from prolipoproteins. This is Lipoprotein signal peptidase from Lactococcus lactis subsp. lactis (strain IL1403) (Streptococcus lactis).